We begin with the raw amino-acid sequence, 156 residues long: Small ribosomal subunit protein uS7 (156 aa).

Belongs to the universal ribosomal protein uS7 family. In terms of assembly, part of the 30S ribosomal subunit. Contacts proteins S9 and S11.

Its function is as follows. One of the primary rRNA binding proteins, it binds directly to 16S rRNA where it nucleates assembly of the head domain of the 30S subunit. Is located at the subunit interface close to the decoding center, probably blocks exit of the E-site tRNA. The protein is Small ribosomal subunit protein uS7 of Burkholderia multivorans (strain ATCC 17616 / 249).